Reading from the N-terminus, the 631-residue chain is Phosphomethylpyrimidine synthase (631 aa).

Substrate contacts are provided by residues N239, M268, Y297, H333, 353 to 355, 394 to 397, and E433; these read SRG and DGLR. H437 contacts Zn(2+). Residue Y460 participates in substrate binding. H501 is a binding site for Zn(2+). [4Fe-4S] cluster-binding residues include C581, C584, and C589.

This sequence belongs to the ThiC family. As to quaternary structure, homodimer. The cofactor is [4Fe-4S] cluster.

The catalysed reaction is 5-amino-1-(5-phospho-beta-D-ribosyl)imidazole + S-adenosyl-L-methionine = 4-amino-2-methyl-5-(phosphooxymethyl)pyrimidine + CO + 5'-deoxyadenosine + formate + L-methionine + 3 H(+). The protein operates within cofactor biosynthesis; thiamine diphosphate biosynthesis. Its function is as follows. Catalyzes the synthesis of the hydroxymethylpyrimidine phosphate (HMP-P) moiety of thiamine from aminoimidazole ribotide (AIR) in a radical S-adenosyl-L-methionine (SAM)-dependent reaction. The chain is Phosphomethylpyrimidine synthase from Escherichia coli O6:H1 (strain CFT073 / ATCC 700928 / UPEC).